Consider the following 670-residue polypeptide: Mannosyl-oligosaccharide alpha-1,2-mannosidase IA (670 aa).

Topologically, residues 1-30 (MTGILPTYQRFVNGVPVPSISRRSFRLREK) are cytoplasmic. The helical; Signal-anchor for type II membrane protein transmembrane segment at 31-51 (YLIVSVLLTFGIVWLGALFYL) threads the bilayer. Residues 52-670 (PEFKSSNSVN…EPAHAQNNRI (619 aa)) are Lumenal-facing. Asparagine 61 is a glycosylation site (N-linked (GlcNAc...) asparagine). Positions 135–177 (DVAPSVSSSRGPSKPPVDAIEEPAVGNNAANKDVSPSGPKAES) are disordered. A disulfide bridge connects residues cysteine 480 and cysteine 512. Glutamate 526 (proton donor) is an active-site residue. Residue threonine 637 coordinates Ca(2+).

It belongs to the glycosyl hydrolase 47 family. The cofactor is Ca(2+). In terms of processing, N-glycosylated. Contains high mannose-type oligosaccharides.

Its subcellular location is the golgi apparatus membrane. It carries out the reaction N(4)-(alpha-D-Man-(1-&gt;2)-alpha-D-Man-(1-&gt;2)-alpha-D-Man-(1-&gt;3)-[alpha-D-Man-(1-&gt;2)-alpha-D-Man-(1-&gt;3)-[alpha-D-Man-(1-&gt;2)-alpha-D-Man-(1-&gt;6)]-alpha-D-Man-(1-&gt;6)]-beta-D-Man-(1-&gt;4)-beta-D-GlcNAc-(1-&gt;4)-beta-D-GlcNAc)-L-asparaginyl-[protein] (N-glucan mannose isomer 9A1,2,3B1,2,3) + 4 H2O = N(4)-(alpha-D-Man-(1-&gt;3)-[alpha-D-Man-(1-&gt;3)-[alpha-D-Man-(1-&gt;6)]-alpha-D-Man-(1-&gt;6)]-beta-D-Man-(1-&gt;4)-beta-D-GlcNAc-(1-&gt;4)-beta-D-GlcNAc)-L-asparaginyl-[protein] (N-glucan mannose isomer 5A1,2) + 4 beta-D-mannose. The enzyme catalyses N(4)-(alpha-D-Man-(1-&gt;2)-alpha-D-Man-(1-&gt;2)-alpha-D-Man-(1-&gt;3)-[alpha-D-Man-(1-&gt;3)-[alpha-D-Man-(1-&gt;2)-alpha-D-Man-(1-&gt;6)]-alpha-D-Man-(1-&gt;6)]-beta-D-Man-(1-&gt;4)-beta-D-GlcNAc-(1-&gt;4)-beta-D-GlcNAc)-L-asparaginyl-[protein] (N-glucan mannose isomer 8A1,2,3B1,3) + 3 H2O = N(4)-(alpha-D-Man-(1-&gt;3)-[alpha-D-Man-(1-&gt;3)-[alpha-D-Man-(1-&gt;6)]-alpha-D-Man-(1-&gt;6)]-beta-D-Man-(1-&gt;4)-beta-D-GlcNAc-(1-&gt;4)-beta-D-GlcNAc)-L-asparaginyl-[protein] (N-glucan mannose isomer 5A1,2) + 3 beta-D-mannose. It participates in protein modification; protein glycosylation. Its activity is regulated as follows. Strongly inhibited by 1-deoxymannojirimycin, an inhibitor of class I alpha-mannosidases, and by EDTA. EDTA inhibition is reversed by the addition of calcium, but not of magnesium. Its function is as follows. Involved in the maturation of Asn-linked oligosaccharides. Converts Man(9)GlcNAc(2) to Man(5)GlcNAc(2) primarily through the Man(7)GlcNAc(2) isomer C processing intermediate. The polypeptide is Mannosyl-oligosaccharide alpha-1,2-mannosidase IA (Spodoptera frugiperda (Fall armyworm)).